A 352-amino-acid polypeptide reads, in one-letter code: Alanine racemase (352 aa).

Lysine 34 serves as the catalytic Proton acceptor; specific for D-alanine. Lysine 34 carries the N6-(pyridoxal phosphate)lysine modification. Position 126 (arginine 126) interacts with substrate. The active-site Proton acceptor; specific for L-alanine is tyrosine 248. A substrate-binding site is contributed by methionine 296.

Belongs to the alanine racemase family. The cofactor is pyridoxal 5'-phosphate.

The catalysed reaction is L-alanine = D-alanine. It participates in amino-acid biosynthesis; D-alanine biosynthesis; D-alanine from L-alanine: step 1/1. Its function is as follows. Catalyzes the interconversion of L-alanine and D-alanine. May also act on other amino acids. In Deinococcus deserti (strain DSM 17065 / CIP 109153 / LMG 22923 / VCD115), this protein is Alanine racemase (alr).